Here is a 421-residue protein sequence, read N- to C-terminus: Tyrosine--tRNA ligase (421 aa).

L-tyrosine is bound at residue Y36. Residues 41 to 50 (PTADSLHIGH) carry the 'HIGH' region motif. Y170 and Q174 together coordinate L-tyrosine. Residues 231–235 (KFGKS) carry the 'KMSKS' region motif. ATP is bound at residue K234. The region spanning 353–420 (TNIVEALIET…KKKYFMVNYQ (68 aa)) is the S4 RNA-binding domain.

Belongs to the class-I aminoacyl-tRNA synthetase family. TyrS type 1 subfamily. As to quaternary structure, homodimer.

It localises to the cytoplasm. The enzyme catalyses tRNA(Tyr) + L-tyrosine + ATP = L-tyrosyl-tRNA(Tyr) + AMP + diphosphate + H(+). Its function is as follows. Catalyzes the attachment of tyrosine to tRNA(Tyr) in a two-step reaction: tyrosine is first activated by ATP to form Tyr-AMP and then transferred to the acceptor end of tRNA(Tyr). The chain is Tyrosine--tRNA ligase from Staphylococcus epidermidis (strain ATCC 35984 / DSM 28319 / BCRC 17069 / CCUG 31568 / BM 3577 / RP62A).